A 125-amino-acid polypeptide reads, in one-letter code: Fluoride-specific ion channel FluC (125 aa).

A run of 4 helical transmembrane segments spans residues 5-25, 33-53, 66-86, and 100-120; these read IFLV…VSLL, IFPL…GILV, VKIF…SFSL, and LVLY…LGYI. The Na(+) site is built by Gly-76 and Thr-79.

It belongs to the fluoride channel Fluc/FEX (TC 1.A.43) family.

It is found in the cell inner membrane. It catalyses the reaction fluoride(in) = fluoride(out). Na(+) is not transported, but it plays an essential structural role and its presence is essential for fluoride channel function. In terms of biological role, fluoride-specific ion channel. Important for reducing fluoride concentration in the cell, thus reducing its toxicity. In Azobacteroides pseudotrichonymphae genomovar. CFP2, this protein is Fluoride-specific ion channel FluC.